A 224-amino-acid chain; its full sequence is Large ribosomal subunit protein uL16z (224 aa).

Belongs to the universal ribosomal protein uL16 family. Component of the small ribosomal subunit. Mature ribosomes consist of a small (40S) and a large (60S) subunit. The 40S subunit contains about 33 different proteins and 1 molecule of RNA (18S). The 60S subunit contains about 49 different proteins and 3 molecules of RNA (25S, 5.8S and 5S).

The sequence is that of Large ribosomal subunit protein uL16z (SC34) from Oryza sativa subsp. indica (Rice).